The primary structure comprises 443 residues: Glutamyl-tRNA reductase (443 aa).

Residues 55–58 (TCNR), serine 113, 118–120 (EPQ), and glutamine 124 contribute to the substrate site. The Nucleophile role is filled by cysteine 56. Residue 193-198 (GAGEMI) coordinates NADP(+).

It belongs to the glutamyl-tRNA reductase family. Homodimer.

It catalyses the reaction (S)-4-amino-5-oxopentanoate + tRNA(Glu) + NADP(+) = L-glutamyl-tRNA(Glu) + NADPH + H(+). It functions in the pathway porphyrin-containing compound metabolism; protoporphyrin-IX biosynthesis; 5-aminolevulinate from L-glutamyl-tRNA(Glu): step 1/2. Its pathway is porphyrin-containing compound metabolism; chlorophyll biosynthesis. Functionally, catalyzes the NADPH-dependent reduction of glutamyl-tRNA(Glu) to glutamate 1-semialdehyde (GSA). The polypeptide is Glutamyl-tRNA reductase (Methylibium petroleiphilum (strain ATCC BAA-1232 / LMG 22953 / PM1)).